The primary structure comprises 251 residues: Aliphatic sulfonates import ATP-binding protein SsuB (251 aa).

Residues 3–231 form the ABC transporter domain; the sequence is VSINEVSKYF…PRNKTSQSFQ (229 aa). Position 39–46 (39–46) interacts with ATP; that stretch reads GPSGCGKS.

It belongs to the ABC transporter superfamily. Aliphatic sulfonates importer (TC 3.A.1.17.2) family. As to quaternary structure, the complex is composed of two ATP-binding proteins (SsuB), two transmembrane proteins (SsuC) and a solute-binding protein (SsuA).

The protein resides in the cell membrane. The catalysed reaction is ATP + H2O + aliphatic sulfonate-[sulfonate-binding protein]Side 1 = ADP + phosphate + aliphatic sulfonateSide 2 + [sulfonate-binding protein]Side 1.. Functionally, part of the ABC transporter complex SsuABC involved in aliphatic sulfonates import. Responsible for energy coupling to the transport system. This chain is Aliphatic sulfonates import ATP-binding protein SsuB, found in Bacillus thuringiensis subsp. konkukian (strain 97-27).